We begin with the raw amino-acid sequence, 73 residues long: Large ribosomal subunit protein bL31 (73 aa).

The protein belongs to the bacterial ribosomal protein bL31 family. Type A subfamily. As to quaternary structure, part of the 50S ribosomal subunit.

Its function is as follows. Binds the 23S rRNA. The chain is Large ribosomal subunit protein bL31 from Agrobacterium fabrum (strain C58 / ATCC 33970) (Agrobacterium tumefaciens (strain C58)).